Reading from the N-terminus, the 227-residue chain is Extracellular small neutral protease (227 aa).

The first 29 residues, 1–29, serve as a signal peptide directing secretion; sequence MRITLPLLSTAVGLGLTAAVLGTGPAATA. The propeptide occupies 30 to 42; that stretch reads AAPQEPVRAAQLG. The Ca(2+) site is built by D156 and T158. H163 is a binding site for Zn(2+). Residue E164 is part of the active site. Positions 167 and 173 each coordinate Zn(2+). C179 and C192 form a disulfide bridge.

The protein belongs to the peptidase M7 family. The cofactor is Ca(2+). It depends on Zn(2+) as a cofactor. Post-translationally, the N-terminus is blocked.

Its subcellular location is the secreted. It carries out the reaction Hydrolyzes proteins with a preference for Tyr or Phe in the P1' position. Has no action on amino-acid p-nitroanilides.. The polypeptide is Extracellular small neutral protease (snpA) (Streptomyces lividans).